A 2998-amino-acid polypeptide reads, in one-letter code: Probable polyketide synthase 14 (2998 aa).

One can recognise a Ketosynthase family 3 (KS3) domain in the interval 19–456; it reads EDDIAIIGIG…GSNCCLILSE (438 aa). Active-site for beta-ketoacyl synthase activity residues include cysteine 189, histidine 331, and histidine 376. The acyl/malonyl transferase stretch occupies residues 657–690; sequence GIEASFIVGHSLGEIPAAYCSGMITLDTLCYLIY. Serine 667 acts as the For acyl/malonyl transferase activity in catalysis. Residues 962–1084 form an N-terminal hotdog fold region; it reads IDQLGFSLIE…GNFQLFTSGN (123 aa). Positions 962-1249 constitute a PKS/mFAS DH domain; the sequence is IDQLGFSLIE…CKSLTIIKDS (288 aa). The active-site Proton acceptor; for dehydratase activity is histidine 996. The interval 1101–1249 is C-terminal hotdog fold; it reads NLTKLTKNEL…CKSLTIIKDS (149 aa). Catalysis depends on aspartate 1159, which acts as the Proton donor; for dehydratase activity. A helical membrane pass occupies residues 1979–1999; sequence SILIHSGSGGIGLSALNILKW. Residues 2476-2553 enclose the Carrier domain; the sequence is ENDTSIDSLF…SSIKLITNQL (78 aa). Position 2513 is an O-(pantetheine 4'-phosphoryl)serine (serine 2513). A disordered region spans residues 2559 to 2578; it reads DGQQQQHRQNKKNNNIPENK. Positions 2561–2573 are enriched in low complexity; the sequence is QQQQHRQNKKNNN. Residues 2621-2641 form a helical membrane-spanning segment; sequence IFLTGSTGFLGAYLLWYLIQM.

It depends on pantetheine 4'-phosphate as a cofactor.

The protein resides in the membrane. Functionally, probable polyketide synthase. This Dictyostelium discoideum (Social amoeba) protein is Probable polyketide synthase 14 (pks14).